We begin with the raw amino-acid sequence, 400 residues long: Leukosialin (400 aa).

Residues 1–19 form the signal peptide; sequence MATLLLLLGVLVVSPDALG. The Extracellular segment spans residues 20-253; sequence STTAVQTPTS…PFRNPDENSR (234 aa). Residues Thr-21, Thr-22, Thr-26, and Thr-28 are each glycosylated (O-linked (GalNAc...) threonine). Polar residues-rich tracts occupy residues 21 to 51 and 58 to 112; these read TTAV…SITS and TGDQ…TPHA. The interval 21 to 224 is disordered; sequence TTAVQTPTSG…SSGASGPQVS (204 aa). O-linked (GalNAc...) serine glycans are attached at residues Ser-29 and Ser-35. Thr-36 carries an O-linked (GalNAc...) threonine glycan. O-linked (GalNAc...) serine glycans are attached at residues Ser-37, Ser-41, and Ser-42. Thr-46 and Thr-47 each carry an O-linked (GalNAc...) threonine glycan. Ser-48 is a glycosylation site (O-linked (GalNAc...) serine). Residues Thr-50, Thr-58, and Thr-69 are each glycosylated (O-linked (GalNAc...) threonine). O-linked (GalNAc...) serine glycosylation is found at Ser-99 and Ser-103. Thr-109 and Thr-113 each carry an O-linked (GalNAc...) threonine glycan. Ser-114 carries O-linked (GalNAc...) serine glycosylation. Polar residues-rich tracts occupy residues 121–164 and 172–182; these read TANS…SRGT and ATVSLETSKGT. Thr-136, Thr-137, Thr-173, and Thr-178 each carry an O-linked (GalNAc...) threonine glycan. The segment covering 196–211 has biased composition (low complexity); sequence TSTGTTGPPVTMTTGS. Polar residues predominate over residues 212–224; sequence LEPSSGASGPQVS. Asn-239 carries N-linked (GlcNAc...) asparagine glycosylation. A helical transmembrane segment spans residues 254–276; it reads GMLPVAVLVALLAVIVLVALLLL. The Cytoplasmic portion of the chain corresponds to 277-400; that stretch reads WRRRQKRRTG…EPEGGDGAAP (124 aa). The required for interaction with EZR, MSN and RDX and for co-localization to microvilli stretch occupies residues 278 to 308; the sequence is RRRQKRRTGALVLSRGGKRNGVVDAWAGPAQ. Residues 282-296 carry the Nuclear localization signal motif; that stretch reads KRRTGALVLSRGGKR. Position 291 is a phosphoserine (Ser-291). A compositionally biased stretch (gly residues) spans 320–332; that stretch reads GGSGGDKGSGFPD. The segment at 320–400 is disordered; that stretch reads GGSGGDKGSG…EPEGGDGAAP (81 aa). Phosphoserine is present on Ser-336. Thr-341 bears the Phosphothreonine mark. A Phosphoserine modification is found at Ser-351. Ser-355 carries the phosphoserine; by PKC/PRKCQ modification. A phosphoserine mark is found at Ser-368 and Ser-379.

As to quaternary structure, interacts with SIGLEC1. Monomer. Interacts with CTNNB1. Interacts with RDX (via FERM domain), EZR and MSN. Glycosylated; has a high content of sialic acid and O-linked carbohydrate structures. In terms of processing, phosphorylation at Ser-355 is regulated by chemokines, requires its association with ERM proteins (EZR, RDX and MSN) and is essential for its function in the regulation of T-cell trafficking to lymph nodes. Post-translationally, has a high content of sialic acid and O-linked carbohydrate structures. Cleavage by CTSG releases its extracellular domain and triggers its intramembrane proteolysis by gamma-secretase releasing the CD43 cytoplasmic tail chain (CD43-ct) which translocates to the nucleus. In terms of processing, sumoylated. Cell surface of thymocytes, T-lymphocytes, neutrophils, plasma cells and myelomas.

The protein resides in the membrane. Its subcellular location is the cell projection. The protein localises to the microvillus. It localises to the uropodium. It is found in the nucleus. The protein resides in the PML body. In terms of biological role, predominant cell surface sialoprotein of leukocytes which regulates multiple T-cell functions, including T-cell activation, proliferation, differentiation, trafficking and migration. Positively regulates T-cell trafficking to lymph-nodes via its association with ERM proteins (EZR, RDX and MSN). Negatively regulates Th2 cell differentiation and predisposes the differentiation of T-cells towards a Th1 lineage commitment. Promotes the expression of IFN-gamma by T-cells during T-cell receptor (TCR) activation of naive cells and induces the expression of IFN-gamma by CD4(+) T-cells and to a lesser extent by CD8(+) T-cells. Plays a role in preparing T-cells for cytokine sensing and differentiation into effector cells by inducing the expression of cytokine receptors IFNGR and IL4R, promoting IFNGR and IL4R signaling and by mediating the clustering of IFNGR with TCR. Acts as a major E-selectin ligand responsible for Th17 cell rolling on activated vasculature and recruitment during inflammation. Mediates Th17 cells, but not Th1 cells, adhesion to E-selectin. Acts as a T-cell counter-receptor for SIGLEC1. Its function is as follows. Protects cells from apoptotic signals, promoting cell survival. The chain is Leukosialin (SPN) from Homo sapiens (Human).